The sequence spans 445 residues: Tyrosine--tRNA ligase, mitochondrial (445 aa).

Y33 provides a ligand contact to L-tyrosine. D37 is an ATP binding site. Residues 38–47 carry the 'HIGH' region motif; it reads PTAASLHVGN. L-tyrosine contacts are provided by D77, Y184, Q188, D191, and Q210. Residues 245-249 carry the 'KMSKS' region motif; that stretch reads KLGKS. An ATP-binding site is contributed by K248. Residues 384–445 enclose the S4 RNA-binding domain; sequence QPFSRLLRTL…GKRTFVLDSL (62 aa).

Belongs to the class-I aminoacyl-tRNA synthetase family. In terms of assembly, homodimer.

The protein localises to the mitochondrion matrix. The catalysed reaction is tRNA(Tyr) + L-tyrosine + ATP = L-tyrosyl-tRNA(Tyr) + AMP + diphosphate + H(+). Its function is as follows. Catalyzes the attachment of tyrosine to tRNA(Tyr) in a two-step reaction: tyrosine is first activated by ATP to form Tyr-AMP and then transferred to the acceptor end of tRNA(Tyr). The protein is Tyrosine--tRNA ligase, mitochondrial of Schizosaccharomyces pombe (strain 972 / ATCC 24843) (Fission yeast).